Reading from the N-terminus, the 662-residue chain is Sodium/glucose cotransporter 1 (662 aa).

The Extracellular segment spans residues 1–24 (MDSSTLSPLTTSTAAPLESYERIR). The chain crosses the membrane as a helical span at residues 25-47 (NAADISVIVIYFLVVMAVGLWAM). Residues 48–66 (FSTNRGTVGGFFLAGRSMV) lie on the Cytoplasmic side of the membrane. The helical transmembrane segment at 67 to 90 (WWPIGASLFASNIGSGHFVGLAGT) threads the bilayer. Residues 91–95 (GAASG) lie on the Extracellular side of the membrane. A helical transmembrane segment spans residues 96–117 (IATGGFEWNALIMVVVLGWVFV). Residues 118-139 (PIYIRAGVVTMPEYLQKRFGGK) lie on the Cytoplasmic side of the membrane. A helical membrane pass occupies residues 140–169 (RIQIYLSILSLLLYIFTKISADIFSGAIFI). Residues 170–176 (QLTLGLD) are Extracellular-facing. The chain crosses the membrane as a helical span at residues 177-193 (IYVAIIILLVITGLYTI). The Cytoplasmic portion of the chain corresponds to 194 to 202 (TGGLAAVIY). The helical transmembrane segment at 203-221 (TDTLQTAIMMVGSVILTGF) threads the bilayer. Residues 222 to 275 (AFHEVGGYEAFTEKYMRAIPSQISYGNTSIPQKCYTPREDAFHIFRDAITGDIP) are Extracellular-facing. N248 carries N-linked (GlcNAc...) asparagine glycosylation. Intrachain disulfides connect C255–C511, C255–C608, C345–C351, C355–C361, and C517–C522. Residues 276 to 295 (WPGLVFGMSILTLWYWCTDQ) form a helical membrane-spanning segment. The Cytoplasmic portion of the chain corresponds to 296–309 (VIVQRCLSAKNLSH). Residues 310–331 (VKAGCILCGYLKVMPMFLIVMM) form a helical membrane-spanning segment. Topologically, residues 332–375 (GMVSRILYTDKVACVVPSECERYCGTRVGCTNIAFPTLVVELMP) are extracellular. The chain crosses the membrane as a helical span at residues 376–406 (NGLRGLMLSVMMASLMSSLTSIFNSASTLFT). Over 407 to 422 (MDIYTKIRKKASEKEL) the chain is Cytoplasmic. A helical membrane pass occupies residues 423 to 444 (MIAGRLFMLFLIGISIAWVPIV). Residues 445–451 (QSAQSGQ) are Extracellular-facing. The chain crosses the membrane as a helical span at residues 452–477 (LFDYIQSITSYLGPPIAAVFLLAIFW). Residue Q457 coordinates D-glucose. Residues 478–481 (KRVN) lie on the Cytoplasmic side of the membrane. The chain crosses the membrane as a helical span at residues 482 to 504 (EPGAFWGLVLGFLIGISRMITEF). Residues 505–525 (AYGTGSCMEPSNCPTIICGVH) lie on the Extracellular side of the membrane. A helical transmembrane segment spans residues 526–547 (YLYFAIILFVISIITVVVVSLF). Topologically, residues 548 to 642 (TKPIPDVHLY…TSEHPLWRTV (95 aa)) are cytoplasmic. Residues 643–660 (VNINGVILLAVAVFCYAY) traverse the membrane as a helical segment. The Extracellular portion of the chain corresponds to 661 to 662 (FA).

This sequence belongs to the sodium:solute symporter (SSF) (TC 2.A.21) family. In terms of processing, N-glycosylation is not necessary for the cotransporter function. As to expression, found predominantly in intestine, renal cortex and in outer renal medulla.

It localises to the apical cell membrane. It catalyses the reaction D-glucose(out) + 2 Na(+)(out) = D-glucose(in) + 2 Na(+)(in). It carries out the reaction D-galactose(out) + 2 Na(+)(out) = D-galactose(in) + 2 Na(+)(in). Enhanced by the interaction with PDZK1IP1/MAP17; but unlike SLC5A2/SGLT2, PDZK1IP1 is not essential for SLC5A1 transporter activity. Possibly modulated by cholesterol binding. Electrogenic Na(+)-coupled sugar symporter that actively transports D-glucose or D-galactose at the plasma membrane, with a Na(+) to sugar coupling ratio of 2:1. Transporter activity is driven by a transmembrane Na(+) electrochemical gradient set by the Na(+)/K(+) pump. Has a primary role in the transport of dietary monosaccharides from enterocytes to blood. Responsible for the absorption of D-glucose or D-galactose across the apical brush-border membrane of enterocytes, whereas basolateral exit is provided by GLUT2. Additionally, functions as a D-glucose sensor in enteroendocrine cells, triggering the secretion of the incretins GCG and GIP that control food intake and energy homeostasis. Together with SGLT2, functions in reabsorption of D-glucose from glomerular filtrate, playing a nonredundant role in the S3 segment of the proximal tubules. Transports D-glucose into endometrial epithelial cells, controlling glycogen synthesis and nutritional support for the embryo as well as the decidual transformation of endometrium prior to conception. Acts as a water channel enabling passive water transport in response to the osmotic gradient created upon sugar and Na(+) uptake. Has high water conductivity comparable to aquaporins and therefore is expected to play an important role in transepithelial water permeability, especially in the small intestine. This chain is Sodium/glucose cotransporter 1 (SLC5A1), found in Oryctolagus cuniculus (Rabbit).